A 230-amino-acid chain; its full sequence is Large ribosomal subunit protein uL1 (230 aa).

This sequence belongs to the universal ribosomal protein uL1 family. As to quaternary structure, part of the 50S ribosomal subunit.

Binds directly to 23S rRNA. The L1 stalk is quite mobile in the ribosome, and is involved in E site tRNA release. Its function is as follows. Protein L1 is also a translational repressor protein, it controls the translation of the L11 operon by binding to its mRNA. In Thermoanaerobacter sp. (strain X514), this protein is Large ribosomal subunit protein uL1.